The primary structure comprises 141 residues: 3-hydroxyacyl-[acyl-carrier-protein] dehydratase FabZ (141 aa).

The active site involves histidine 48.

It belongs to the thioester dehydratase family. FabZ subfamily.

The protein resides in the cytoplasm. It catalyses the reaction a (3R)-hydroxyacyl-[ACP] = a (2E)-enoyl-[ACP] + H2O. Its function is as follows. Involved in unsaturated fatty acids biosynthesis. Catalyzes the dehydration of short chain beta-hydroxyacyl-ACPs and long chain saturated and unsaturated beta-hydroxyacyl-ACPs. The polypeptide is 3-hydroxyacyl-[acyl-carrier-protein] dehydratase FabZ (Streptococcus thermophilus (strain CNRZ 1066)).